Reading from the N-terminus, the 202-residue chain is MEQYLSLFIRSIFLENMALFYFLGMCTFLAVSKKVKTAMGLGVAVIVVLTISVPVNQLVYANILAPGALGWAGFPDTDLSFLSFLTFIGVIAALVQILEMTLDKFFPALYNALGIFLPLITVNCAIFGGVAFAVQRDYTFTESIFYGAGSGAGWALAITLLAAVREKLKYADMPEGVRGLGSVFMIAGLMALGFQSFSGVSI.

The next 6 helical transmembrane spans lie at 11–31 (SIFL…FLAV), 39–59 (MGLG…NQLV), 79–99 (LSFL…QILE), 114–134 (GIFL…AFAV), 144–164 (IFYG…LAAV), and 180–200 (LGSV…FSGV).

Belongs to the NqrDE/RnfAE family. Composed of six subunits; NqrA, NqrB, NqrC, NqrD, NqrE and NqrF.

It is found in the cell inner membrane. The enzyme catalyses a ubiquinone + n Na(+)(in) + NADH + H(+) = a ubiquinol + n Na(+)(out) + NAD(+). In terms of biological role, NQR complex catalyzes the reduction of ubiquinone-1 to ubiquinol by two successive reactions, coupled with the transport of Na(+) ions from the cytoplasm to the periplasm. NqrA to NqrE are probably involved in the second step, the conversion of ubisemiquinone to ubiquinol. This Pseudoalteromonas atlantica (strain T6c / ATCC BAA-1087) protein is Na(+)-translocating NADH-quinone reductase subunit E.